The chain runs to 760 residues: Formate acetyltransferase 1 (760 aa).

The PFL domain maps to 3–625; sequence ELNEKLATAW…KTGNTPDGRR (623 aa). Lys63 bears the N6-acetyllysine; alternate mark. An N6-succinyllysine; alternate modification is found at Lys63. At Lys107 the chain carries N6-succinyllysine. Lys117 carries the N6-acetyllysine; alternate modification. At Lys117 the chain carries N6-succinyllysine; alternate. The residue at position 124 (Lys124) is an N6-succinyllysine. Position 195 is an N6-acetyllysine; alternate (Lys195). Lys195 is modified (N6-succinyllysine; alternate). Cys419 acts as the S-acetylcysteine intermediate in catalysis. Catalysis depends on Cys420, which acts as the Cysteine radical intermediate. N6-acetyllysine; alternate is present on Lys454. Lys454 is subject to N6-succinyllysine; alternate. Lys467 bears the N6-succinyllysine mark. N6-acetyllysine occurs at positions 541 and 591. The Glycine radical domain occupies 632–760; it reads PGANPMHGRD…VITRTFTQSM (129 aa). Residue Lys654 is modified to N6-succinyllysine. Position 735 is a glycine radical (Gly735).

This sequence belongs to the glycyl radical enzyme (GRE) family. PFL subfamily. In terms of assembly, homodimer. Interacts specifically with FocA.

It localises to the cytoplasm. The enzyme catalyses formate + acetyl-CoA = pyruvate + CoA. It functions in the pathway fermentation; pyruvate fermentation; formate from pyruvate: step 1/1. Functionally, catalyzes the conversion of pyruvate to formate and acetyl-CoA. In addition, may be involved in the control of the activity of the formate channel FocA, via direct interaction with FocA. The sequence is that of Formate acetyltransferase 1 (pflB) from Escherichia coli (strain K12).